The chain runs to 568 residues: CTP synthase (568 aa).

Positions 1-276 are amidoligase domain; that stretch reads MPQARTIKHV…DAYLVRRLGL (276 aa). Residue Ser-18 coordinates CTP. A UTP-binding site is contributed by Ser-18. Residues 19 to 24 and Asp-76 each bind ATP; that span reads SLGKGL. Mg(2+) is bound by residues Asp-76 and Glu-150. CTP is bound by residues 157–159, 197–202, and Lys-233; these read DIE and KTKPTQ. UTP is bound by residues 197 to 202 and Lys-233; that span reads KTKPTQ. A Glutamine amidotransferase type-1 domain is found at 301-550; it reads RIALVGKYVD…VNAALEYRAA (250 aa). Gly-364 contacts L-glutamine. Residue Cys-391 is the Nucleophile; for glutamine hydrolysis of the active site. Residues 392–395, Glu-415, and Arg-476 contribute to the L-glutamine site; that span reads LGLQ. Residues His-523 and Glu-525 contribute to the active site.

This sequence belongs to the CTP synthase family. As to quaternary structure, homotetramer.

The enzyme catalyses UTP + L-glutamine + ATP + H2O = CTP + L-glutamate + ADP + phosphate + 2 H(+). The catalysed reaction is L-glutamine + H2O = L-glutamate + NH4(+). It carries out the reaction UTP + NH4(+) + ATP = CTP + ADP + phosphate + 2 H(+). It functions in the pathway pyrimidine metabolism; CTP biosynthesis via de novo pathway; CTP from UDP: step 2/2. Its activity is regulated as follows. Allosterically activated by GTP, when glutamine is the substrate; GTP has no effect on the reaction when ammonia is the substrate. The allosteric effector GTP functions by stabilizing the protein conformation that binds the tetrahedral intermediate(s) formed during glutamine hydrolysis. Inhibited by the product CTP, via allosteric rather than competitive inhibition. Its function is as follows. Catalyzes the ATP-dependent amination of UTP to CTP with either L-glutamine or ammonia as the source of nitrogen. Regulates intracellular CTP levels through interactions with the four ribonucleotide triphosphates. The chain is CTP synthase from Saccharopolyspora erythraea (strain ATCC 11635 / DSM 40517 / JCM 4748 / NBRC 13426 / NCIMB 8594 / NRRL 2338).